The following is a 172-amino-acid chain: Large ribosomal subunit protein uL10 (172 aa).

It belongs to the universal ribosomal protein uL10 family. Part of the ribosomal stalk of the 50S ribosomal subunit. The N-terminus interacts with L11 and the large rRNA to form the base of the stalk. The C-terminus forms an elongated spine to which L12 dimers bind in a sequential fashion forming a multimeric L10(L12)X complex.

Forms part of the ribosomal stalk, playing a central role in the interaction of the ribosome with GTP-bound translation factors. In Rhizobium etli (strain CIAT 652), this protein is Large ribosomal subunit protein uL10.